The primary structure comprises 650 residues: MSDLVKVTLPDGSQKEAPRGTPVIDFVKGQIGAGLAKAAYFAKLDGAPVDLSRALDRDARLEIVTTRSPEALEVARHDAAHVMASVVQKLYPGTQVTIGPAIEDGFYYDFARETPFTPEDLEKIEKATNEAIKADLPFVRSEISMEAALALFEGMGERYKVEIVKDIAAKGAKTLTLYKHGDWVDFCLGPHGPSTGRIGVVKLLNVAGAYWRGDAKNAMLQRIYGTAFFDKKELDAHLAKLEEVKKRDHRRLGPQLGLFTFHEYAPGAPFWLPAGTVLYNVLEDAMRRLVLKNGYQEVKTPLLFNKRLWETSGHWGKYRENMFLVVDSESDPALALEDRCSFSLKPMNCPSHHLIYRMDKRSYRELPVRYFTTDALHRNEASGSLGGLTRVRQFEQDDAHIYLREEQVTDEVLRIFELMKVVYGAFGLGFEATFSTRPEQRIGDDALWDRAEALLRKSLDATGLKWTLNPGDGAFYGPKIDMLVTDSLGRRWQTCTIQLDYAAPERFDLTFVGEDNKEHRPVVIHRAIYGSFERFIAILTEHYAGAFPAWLAPVQARVVTVSDRFDAWAREAAAALQARGWRVEVDGSSDKLGAKIRNAQLAKIPFTLVVGEKEVEARGVSPRRHGGEDLKTMPLETFAELMAREATAPF.

Residues 3–65 (DLVKVTLPDG…DRDARLEIVT (63 aa)) enclose the TGS domain. A catalytic region spans residues 248–548 (DHRRLGPQLG…LTEHYAGAFP (301 aa)). C349, H400, and H525 together coordinate Zn(2+).

This sequence belongs to the class-II aminoacyl-tRNA synthetase family. As to quaternary structure, homodimer. Zn(2+) is required as a cofactor.

It is found in the cytoplasm. The enzyme catalyses tRNA(Thr) + L-threonine + ATP = L-threonyl-tRNA(Thr) + AMP + diphosphate + H(+). Functionally, catalyzes the attachment of threonine to tRNA(Thr) in a two-step reaction: L-threonine is first activated by ATP to form Thr-AMP and then transferred to the acceptor end of tRNA(Thr). Also edits incorrectly charged L-seryl-tRNA(Thr). The protein is Threonine--tRNA ligase of Anaeromyxobacter dehalogenans (strain 2CP-C).